The primary structure comprises 72 residues: MSEATNQLKITQVRSTIGARWKQRESLRTLGLRRIRHTVVRDDNAQTRGLIAVVRHLVEVEPAQNGTGGKAQ.

The protein belongs to the universal ribosomal protein uL30 family. In terms of assembly, part of the 50S ribosomal subunit.

The sequence is that of Large ribosomal subunit protein uL30 from Mycobacterium ulcerans (strain Agy99).